We begin with the raw amino-acid sequence, 289 residues long: Bis(5'-nucleosyl)-tetraphosphatase, symmetrical (289 aa).

Belongs to the Ap4A hydrolase family.

The enzyme catalyses P(1),P(4)-bis(5'-adenosyl) tetraphosphate + H2O = 2 ADP + 2 H(+). Its function is as follows. Hydrolyzes diadenosine 5',5'''-P1,P4-tetraphosphate to yield ADP. The sequence is that of Bis(5'-nucleosyl)-tetraphosphatase, symmetrical from Yersinia pestis bv. Antiqua (strain Antiqua).